Consider the following 459-residue polypeptide: UDP-N-acetylmuramoylalanine--D-glutamate ligase (459 aa).

Position 119 to 125 (119 to 125 (GTNGKTT)) interacts with ATP.

It belongs to the MurCDEF family.

It localises to the cytoplasm. It catalyses the reaction UDP-N-acetyl-alpha-D-muramoyl-L-alanine + D-glutamate + ATP = UDP-N-acetyl-alpha-D-muramoyl-L-alanyl-D-glutamate + ADP + phosphate + H(+). Its pathway is cell wall biogenesis; peptidoglycan biosynthesis. Cell wall formation. Catalyzes the addition of glutamate to the nucleotide precursor UDP-N-acetylmuramoyl-L-alanine (UMA). The sequence is that of UDP-N-acetylmuramoylalanine--D-glutamate ligase from Lacticaseibacillus paracasei (strain ATCC 334 / BCRC 17002 / CCUG 31169 / CIP 107868 / KCTC 3260 / NRRL B-441) (Lactobacillus paracasei).